Here is a 349-residue protein sequence, read N- to C-terminus: Fructose-1,6-bisphosphatase class 1 (349 aa).

Positions 113, 135, 137, and 138 each coordinate Mg(2+). Residues 138–141 (DGSS), Asn230, Tyr258, and Lys288 each bind substrate. Glu294 serves as a coordination point for Mg(2+).

It belongs to the FBPase class 1 family. As to quaternary structure, homotetramer. Mg(2+) serves as cofactor.

The protein resides in the cytoplasm. The enzyme catalyses beta-D-fructose 1,6-bisphosphate + H2O = beta-D-fructose 6-phosphate + phosphate. The protein operates within carbohydrate biosynthesis; Calvin cycle. The sequence is that of Fructose-1,6-bisphosphatase class 1 from Trichormus variabilis (strain ATCC 29413 / PCC 7937) (Anabaena variabilis).